The following is a 274-amino-acid chain: Diaminopimelate epimerase (274 aa).

The substrate site is built by Asn11, Gln44, and Asn64. Cys73 serves as the catalytic Proton donor. Substrate-binding positions include 74 to 75 (GN), Asn157, Asn190, and 208 to 209 (ER). The Proton acceptor role is filled by Cys217. Position 218-219 (218-219 (GS)) interacts with substrate.

It belongs to the diaminopimelate epimerase family. As to quaternary structure, homodimer.

Its subcellular location is the cytoplasm. The enzyme catalyses (2S,6S)-2,6-diaminopimelate = meso-2,6-diaminopimelate. It functions in the pathway amino-acid biosynthesis; L-lysine biosynthesis via DAP pathway; DL-2,6-diaminopimelate from LL-2,6-diaminopimelate: step 1/1. Catalyzes the stereoinversion of LL-2,6-diaminopimelate (L,L-DAP) to meso-diaminopimelate (meso-DAP), a precursor of L-lysine and an essential component of the bacterial peptidoglycan. This is Diaminopimelate epimerase from Mannheimia succiniciproducens (strain KCTC 0769BP / MBEL55E).